The following is a 72-amino-acid chain: Disintegrin sasaimin (72 aa).

The Disintegrin domain maps to 1 to 72 (EAGEECDCGA…SAGCPRNPFH (72 aa)). 6 disulfide bridges follow: Cys-6–Cys-21, Cys-8–Cys-16, Cys-15–Cys-38, Cys-29–Cys-35, Cys-34–Cys-59, and Cys-47–Cys-66. Positions 51–53 (RGD) match the Cell attachment site motif.

The protein belongs to the venom metalloproteinase (M12B) family. P-II subfamily. P-IIa sub-subfamily. Monomer. Expressed by the venom gland.

Its subcellular location is the secreted. In terms of biological role, inhibits ADP- (IC(50)=66 nM) and collagen-induced (IC(50)=100 nM) aggregation of human platelets. In vitro, inhibits adhesion of endothelial cells to vitronectin, type-I collagen and, to a lower degree, fibronectin and laminin. The protein is Disintegrin sasaimin of Cerrophidion sasai (Costa Rica montane pitviper).